The sequence spans 570 residues: Dihydroxy-acid dehydratase 2 (570 aa).

Cys51 provides a ligand contact to [2Fe-2S] cluster. Mg(2+) is bound at residue Asp83. Cys124 contributes to the [2Fe-2S] cluster binding site. Mg(2+)-binding residues include Asp125 and Lys126. Lys126 is subject to N6-carboxylysine. Position 196 (Cys196) interacts with [2Fe-2S] cluster. Glu446 serves as a coordination point for Mg(2+). Ser472 acts as the Proton acceptor in catalysis.

The protein belongs to the IlvD/Edd family. Homodimer. [2Fe-2S] cluster serves as cofactor. It depends on Mg(2+) as a cofactor.

It carries out the reaction (2R)-2,3-dihydroxy-3-methylbutanoate = 3-methyl-2-oxobutanoate + H2O. The catalysed reaction is (2R,3R)-2,3-dihydroxy-3-methylpentanoate = (S)-3-methyl-2-oxopentanoate + H2O. Its pathway is amino-acid biosynthesis; L-isoleucine biosynthesis; L-isoleucine from 2-oxobutanoate: step 3/4. It participates in amino-acid biosynthesis; L-valine biosynthesis; L-valine from pyruvate: step 3/4. Functions in the biosynthesis of branched-chain amino acids. Catalyzes the dehydration of (2R,3R)-2,3-dihydroxy-3-methylpentanoate (2,3-dihydroxy-3-methylvalerate) into 2-oxo-3-methylpentanoate (2-oxo-3-methylvalerate) and of (2R)-2,3-dihydroxy-3-methylbutanoate (2,3-dihydroxyisovalerate) into 2-oxo-3-methylbutanoate (2-oxoisovalerate), the penultimate precursor to L-isoleucine and L-valine, respectively. This Bordetella bronchiseptica (strain ATCC BAA-588 / NCTC 13252 / RB50) (Alcaligenes bronchisepticus) protein is Dihydroxy-acid dehydratase 2.